Here is a 333-residue protein sequence, read N- to C-terminus: Holliday junction branch migration complex subunit RuvB (333 aa).

Residues 1 to 182 (MTNRILDMEQ…FGITGHMEYY (182 aa)) are large ATPase domain (RuvB-L). ATP is bound by residues L21, R22, G63, K66, T67, T68, 129–131 (EDF), R172, Y182, and R219. T67 contributes to the Mg(2+) binding site. The interval 183-253 (ELADLTEIVE…ITDKALTMLD (71 aa)) is small ATPAse domain (RuvB-S). The tract at residues 256–333 (REGLDYVDQK…EHLGYPYTEK (78 aa)) is head domain (RuvB-H). Positions 292, 311, 313, and 316 each coordinate DNA.

The protein belongs to the RuvB family. Homohexamer. Forms an RuvA(8)-RuvB(12)-Holliday junction (HJ) complex. HJ DNA is sandwiched between 2 RuvA tetramers; dsDNA enters through RuvA and exits via RuvB. An RuvB hexamer assembles on each DNA strand where it exits the tetramer. Each RuvB hexamer is contacted by two RuvA subunits (via domain III) on 2 adjacent RuvB subunits; this complex drives branch migration. In the full resolvosome a probable DNA-RuvA(4)-RuvB(12)-RuvC(2) complex forms which resolves the HJ.

Its subcellular location is the cytoplasm. The enzyme catalyses ATP + H2O = ADP + phosphate + H(+). Functionally, the RuvA-RuvB-RuvC complex processes Holliday junction (HJ) DNA during genetic recombination and DNA repair, while the RuvA-RuvB complex plays an important role in the rescue of blocked DNA replication forks via replication fork reversal (RFR). RuvA specifically binds to HJ cruciform DNA, conferring on it an open structure. The RuvB hexamer acts as an ATP-dependent pump, pulling dsDNA into and through the RuvAB complex. RuvB forms 2 homohexamers on either side of HJ DNA bound by 1 or 2 RuvA tetramers; 4 subunits per hexamer contact DNA at a time. Coordinated motions by a converter formed by DNA-disengaged RuvB subunits stimulates ATP hydrolysis and nucleotide exchange. Immobilization of the converter enables RuvB to convert the ATP-contained energy into a lever motion, pulling 2 nucleotides of DNA out of the RuvA tetramer per ATP hydrolyzed, thus driving DNA branch migration. The RuvB motors rotate together with the DNA substrate, which together with the progressing nucleotide cycle form the mechanistic basis for DNA recombination by continuous HJ branch migration. Branch migration allows RuvC to scan DNA until it finds its consensus sequence, where it cleaves and resolves cruciform DNA. The protein is Holliday junction branch migration complex subunit RuvB of Streptococcus suis (strain 98HAH33).